A 314-amino-acid chain; its full sequence is ATP synthase gamma chain (314 aa).

The protein belongs to the ATPase gamma chain family. F-type ATPases have 2 components, CF(1) - the catalytic core - and CF(0) - the membrane proton channel. CF(1) has five subunits: alpha(3), beta(3), gamma(1), delta(1), epsilon(1). CF(0) has three main subunits: a, b and c.

It is found in the cellular thylakoid membrane. In terms of biological role, produces ATP from ADP in the presence of a proton gradient across the membrane. The gamma chain is believed to be important in regulating ATPase activity and the flow of protons through the CF(0) complex. This Rippkaea orientalis (strain PCC 8801 / RF-1) (Cyanothece sp. (strain PCC 8801)) protein is ATP synthase gamma chain.